A 303-amino-acid polypeptide reads, in one-letter code: D-alanine--D-alanine ligase (303 aa).

Residues 100–295 form the ATP-grasp domain; that stretch reads KQLLRRHGIL…FPALIARLIE (196 aa). An ATP-binding site is contributed by 127 to 180; sequence GLGYPLFVKPNTGGSSLCLSRVTQPEGLAPALEAVFAHCGEAIVEPAIPGVEVT. 3 residues coordinate Mg(2+): Asp249, Glu262, and Asn264.

Belongs to the D-alanine--D-alanine ligase family. Requires Mg(2+) as cofactor. It depends on Mn(2+) as a cofactor.

Its subcellular location is the cytoplasm. It catalyses the reaction 2 D-alanine + ATP = D-alanyl-D-alanine + ADP + phosphate + H(+). It functions in the pathway cell wall biogenesis; peptidoglycan biosynthesis. Cell wall formation. The polypeptide is D-alanine--D-alanine ligase (Nitratidesulfovibrio vulgaris (strain ATCC 29579 / DSM 644 / CCUG 34227 / NCIMB 8303 / VKM B-1760 / Hildenborough) (Desulfovibrio vulgaris)).